The chain runs to 620 residues: Mitochondrial Rho GTPase 2 (620 aa).

Topologically, residues 1 to 594 (MKRDVRILLL…ELHTTSFWLR (594 aa)) are cytoplasmic. Positions 2–168 (KRDVRILLLG…FYYAQKAVLH (167 aa)) constitute a Miro 1 domain. GTP contacts are provided by Gly-16, Lys-17, Thr-18, and Ser-19. Thr-18 provides a ligand contact to Mg(2+). Mg(2+) contacts are provided by Pro-35 and Asp-57. Ser-59 is a GTP binding site. Lys-96 participates in a covalent cross-link: Glycyl lysine isopeptide (Lys-Gly) (interchain with G-Cter in ubiquitin). Positions 118, 119, 121, 149, and 150 each coordinate GTP. A Glycyl lysine isopeptide (Lys-Gly) (interchain with G-Cter in ubiquitin) cross-link involves residue Lys-119. Lys-164 participates in a covalent cross-link: Glycyl lysine isopeptide (Lys-Gly) (interchain with G-Cter in ubiquitin). EF-hand domains are found at residues 184-219 (ACAQALTRIFRLSDQDMDQALSDQELNAFQTCCFGH) and 304-339 (HGYQFAQRMLEKHDQDRDGALSPAELESLFSVFPGP). The Ca(2+) site is built by Asp-197, Asp-199, Asp-201, Glu-208, Asp-317, Asp-319, Asp-321, and Glu-328. The segment at 340–364 (PWGPQLPRHRPHRGRSAAPARVPLP) is disordered. Positions 415–578 (RNVLLCKVLG…FARLATMATF (164 aa)) constitute a Miro 2 domain. 4 residues coordinate GTP: Gly-427, Gly-429, Lys-430, and Ser-431. 2 residues coordinate Mg(2+): Ser-431 and Glu-473. GTP-binding residues include Lys-527, Asp-529, and Cys-558. A helical; Anchor for type IV membrane protein transmembrane segment spans residues 595–617 (VALGAVGAAVAAILSFSLYRVLV). Topologically, residues 618 to 620 (KSR) are mitochondrial intermembrane.

It belongs to the mitochondrial Rho GTPase family. As to quaternary structure, homodimer. Interacts with the kinesin-binding proteins TRAK1/OIP106 and TRAK2/GRIF1, forming a link between mitochondria and the trafficking apparatus of the microtubules. Interacts with ARMCX3. Found in a complex with KIF5B, OGT, RHOT1 and TRAK1. Ubiquitinated by PRKN in a PINK1-dependent manner, leading to its degradation.

The protein resides in the mitochondrion outer membrane. It catalyses the reaction GTP + H2O = GDP + phosphate + H(+). The catalysed reaction is ATP + H2O = ADP + phosphate + H(+). It carries out the reaction UTP + H2O = UDP + phosphate + H(+). Functionally, atypical mitochondrial nucleoside-triphosphatase (NTPase) involved in mitochondrial trafficking. Probably involved in control of anterograde transport of mitochondria and their subcellular distribution. Can hydrolyze GTP, ATP and UTP. The polypeptide is Mitochondrial Rho GTPase 2 (RHOT2) (Sus scrofa (Pig)).